The primary structure comprises 60 residues: DNA gyrase inhibitor YacG (60 aa).

Positions 15, 18, 30, and 34 each coordinate Zn(2+).

It belongs to the DNA gyrase inhibitor YacG family. As to quaternary structure, interacts with GyrB. Zn(2+) serves as cofactor.

Functionally, inhibits all the catalytic activities of DNA gyrase by preventing its interaction with DNA. Acts by binding directly to the C-terminal domain of GyrB, which probably disrupts DNA binding by the gyrase. This Bradyrhizobium diazoefficiens (strain JCM 10833 / BCRC 13528 / IAM 13628 / NBRC 14792 / USDA 110) protein is DNA gyrase inhibitor YacG.